Reading from the N-terminus, the 688-residue chain is Potassium-transporting ATPase ATP-binding subunit (688 aa).

A run of 4 helical transmembrane segments spans residues Pro-34–Leu-54, Ala-62–Ala-82, Val-219–Leu-239, and Val-260–Ile-280. The 4-aspartylphosphate intermediate role is filled by Asp-313. Residues Asp-350, Glu-354, Phe-383–Ser-390, and Lys-401 each bind ATP. Mg(2+)-binding residues include Asp-524 and Asp-528. The next 3 membrane-spanning stretches (helical) occupy residues Phe-594–Met-614, Ala-622–Leu-642, and Ile-662–Leu-682.

This sequence belongs to the cation transport ATPase (P-type) (TC 3.A.3) family. Type IA subfamily. As to quaternary structure, the system is composed of three essential subunits: KdpA, KdpB and KdpC.

The protein localises to the cell inner membrane. The enzyme catalyses K(+)(out) + ATP + H2O = K(+)(in) + ADP + phosphate + H(+). Functionally, part of the high-affinity ATP-driven potassium transport (or Kdp) system, which catalyzes the hydrolysis of ATP coupled with the electrogenic transport of potassium into the cytoplasm. This subunit is responsible for energy coupling to the transport system and for the release of the potassium ions to the cytoplasm. This is Potassium-transporting ATPase ATP-binding subunit from Yersinia pestis bv. Antiqua (strain Antiqua).